The following is a 470-amino-acid chain: Tert-butanol monooxygenase / tert-amyl alcohol desaturase oxygenase subunit (470 aa).

A Rieske domain is found at Trp51 to Ala155. Positions 91, 93, 110, and 113 each coordinate [2Fe-2S] cluster.

The protein belongs to the bacterial ring-hydroxylating dioxygenase alpha subunit family. As to quaternary structure, this two-component enzyme is composed of an oxygenase (MdpJ) and a reductase (MdpK). It depends on [2Fe-2S] cluster as a cofactor.

The enzyme catalyses tert-butanol + NADPH + O2 + H(+) = 2-methylpropane-1,2-diol + NADP(+) + H2O. It carries out the reaction 2-methylbutan-2-ol + NADPH + O2 + H(+) = 3-hydroxy-3-methylbut-1-ene + NADP(+) + 2 H2O. Its function is as follows. Oxygenase component of a two-component system involved in the degradation of tertiary alcohols such as tert-butyl alcohol (TBA) and tert-amyl alcohol (TAA). In the presence of TBA, catalyzes the hydroxylation of TBA to 2-methylpropane-1,2-diol. In the presence of TAA, functions as a desaturase, enabling the degradation of TAA and resulting in the formation of the hemiterpene 3-hydroxy-3-methylbut-1-ene. The specificity of the catalysis depends strongly on the molecule structure of the substrate, allowing either hydroxylation or desaturation reactions. Also catalyzes the desaturation of the tertiary alcohol 3-methyl-3-pentanol (a C6 homolog of TBA and TAA) to 3-methyl-1-penten-3-ol, with lower efficiency. In addition, can transform some secondary alcohols, including the hydroxylation of 2-propanol to 1,2-propanediol, and the desaturation of 2-butanol, 3-methyl-2-butanol and 3-pentanol. In Aquincola tertiaricarbonis, this protein is Tert-butanol monooxygenase / tert-amyl alcohol desaturase oxygenase subunit.